The chain runs to 129 residues: Small ribosomal subunit protein uS11 (129 aa).

This sequence belongs to the universal ribosomal protein uS11 family. In terms of assembly, part of the 30S ribosomal subunit. Interacts with proteins S7 and S18. Binds to IF-3.

Located on the platform of the 30S subunit, it bridges several disparate RNA helices of the 16S rRNA. Forms part of the Shine-Dalgarno cleft in the 70S ribosome. The chain is Small ribosomal subunit protein uS11 from Ectopseudomonas mendocina (strain ymp) (Pseudomonas mendocina).